A 1673-amino-acid chain; its full sequence is Protein TIC 214 (1673 aa).

6 helical membrane-spanning segments follow: residues 32–52 (AGLYYGFLTALALKTSYILLI), 70–90 (LILGQLGQLLSIYYAPLYIAF), 93–113 (PYTLTVLTLIYFLVNLFGNNL), 130–150 (LEILCIFLNNLILQLLNTCIF), 170–190 (MVFLISSFSAWLIGQILVLMC), and 218–238 (FFLVVNCLFGSSLFILTIQSL). Composition is skewed to basic and acidic residues over residues 264–276 (LKKSGVAKEGKST) and 283–298 (SHEKDSLKKEPYSKLE). Disordered stretches follow at residues 264–302 (LKKSGVAKEGKSTEDEEDLSHEKDSLKKEPYSKLENEDE), 547–611 (VVFD…YSIR), 1120–1146 (NKQSLQKRNSSGNSNLDDSKNRNTDNL), and 1370–1433 (QQNQ…SEDD). Positions 562–586 (DNGNIQNNSSDKTINPQNNLTNLKP) are enriched in polar residues. Basic and acidic residues predominate over residues 597 to 611 (TTEKEPKDDKSYSIR). A compositionally biased stretch (polar residues) spans 1120 to 1135 (NKQSLQKRNSSGNSNL). The span at 1370–1379 (QQNQTTTKMN) shows a compositional bias: low complexity. 2 stretches are compositionally biased toward basic and acidic residues: residues 1380 to 1399 (TETKNKQKSKVENEKNKKTE) and 1406 to 1423 (TKNKQKSKTENEGNKETE).

It belongs to the TIC214 family. Part of the Tic complex.

It localises to the plastid. It is found in the chloroplast inner membrane. Its function is as follows. Involved in protein precursor import into chloroplasts. May be part of an intermediate translocation complex acting as a protein-conducting channel at the inner envelope. The sequence is that of Protein TIC 214 from Cuscuta gronovii (Common dodder).